The sequence spans 1551 residues: MGKDSFTPLYDGGDSSHVHLNKFGSNQLSQSKKSWIARNFSRRECIRFVPKSHDVSRCKCGRPRERHSQQALESGQGSEEWNVASCTTKHPTNAYGEIDFEGYGGQKRAPYLRMSHDTDANLVITLMLKRWNLEIPNLVISVTGGAKSFVLKPRLREMFRRGLIKAAKTTGAWIITGGTNTGVMKHVGEAVKEQQLMFGSDTQVNVIGIATWGIVDKQSDLISEKNGKYPALYSMEPTPGHQGAMLDPNHSHFFLVDDGTEGKYGVEIGMRSRIEEAIMKVKTDSRSEAGSIGVPVVLLVLEGGPNTVATMYELIKKKVPAVVIDGSGRAASVVGFAYNHTIKRNVDGQTINVIDPQYEDEVRAKVVEVFGAKGADKTYSMIKDVLEDEKMISVYSLDGEISQDIDLAILKALLKANRSSPVAQLNLALAWNRIDLAKSDIFTEEQQWTTETLSAAMLTALLDDKAEFAELFLQNGLSMREFLSLDILCKLYAEVPGNTTIKPLLQKEMGKRQVKTIDMDVVGEVIEELMGDMFESYYRKDGHYFGELASYAEGLVLKNRKSSKDLLANINRIDPLPTPYLDVFLWAVLCNRRELARVLWEAGREPMAAALMASRLLKRMASRAQEDNTITDISSDLYDHARLFEERAVGVLDECFNENETLSQTLLVRELDHYSRMTALELAVSAESQDFIAHTSCQVLLTRLWMGTMAMNTRWWKVLVCLYLPVLIFPIIYFVPDEQHERQAAEREHQKSLNQKSSKVKSHKEKNDAPVVPVYRSKEEKAVSNDEEARVGTENEEEDFQLEDYIPEIREDDSMEVIMRNKKLGFCDRIMHFYSAPFSKFVGNVVGYLAFIFLYAYVVLFNFPRFDPAKTLGGIHPTEIVLYFWVFTILIEEIRQLAAKPPKYIKDKVSVYFSDTWNFVDIFSLTVFIIAIILRFFTNSRIFTASRIILSLDIIFFIVRSLQIFSVNRLLGPKLVMIQKMMQDLAQFIIILAVFTIAYGIALHAVMFPSPGIYARNNTWVTITSVVQYPYWQMYGELFLDEIQGEKPKEFGEVDPDGRWLSPLLLAIYMVFTNILLLNLLIAIFNYTFERVQEDSDKVWKFQRYDLVQEYHSRPVFAPPLVLLGHILIFIRWVWRMCRCGHPPRGSTMKIGLSPAEMEQMDNWEFQAAEMYIHQQQQKNSGTLEERVRALGDRVDCINSQLNRVLDSMSGTRAHALTDGNGLEGGHDSEGRLARMEVELSSNSESLQKILALLQQQPPVKGQAAVPIQLTLLHYKARSSPYPGSTAKRFAVQDNMVDWQVPFPDYKPVNYTAPVVLANPVWADKDLMAMSPRPELPYNQMDHTCNVNRVSYNGTYVVKDGLPLNPMGRTGMQGRGLLGRFGPNHAADPVVTRWKRTSAGVMLQGGKKVLEFVAIQRKDNNQWAIPGGMVEPGQLVTQALKAEFGEEAMAKLNVSQEEKERIAKQIERLFQQGQEIYKGYVDDPRNTDNAWMETVAVNFHDDKGDLFGDITLQAGDDAAAVRWQRVSGNIPLYASHVSILEKVAKMRDAAF.

The Cytoplasmic portion of the chain corresponds to Met-1–Arg-714. The stretch at Trp-715–Pro-730 is an intramembrane region. The Cytoplasmic portion of the chain corresponds to Ile-731–Pro-837. The interval Ala-744–Asn-767 is disordered. Residues Phe-838 to Val-858 traverse the membrane as a helical segment. Over Val-859–Pro-877 the chain is Extracellular. Residues Thr-878 to Ala-898 traverse the membrane as a helical segment. 2 residues coordinate Ca(2+): Glu-893 and Gln-896. Topologically, residues Ala-899 to Thr-916 are cytoplasmic. The chain crosses the membrane as a helical span at residues Trp-917 to Phe-937. Residues Asn-918 and Asp-921 each coordinate Ca(2+). The Extracellular portion of the chain corresponds to Thr-938–Arg-947. The helical transmembrane segment at Ile-948 to Asn-968 threads the bilayer. The Cytoplasmic portion of the chain corresponds to Arg-969–Lys-980. The chain crosses the membrane as a helical span at residues Met-981 to Ile-1001. Topologically, residues Ala-1002–Asn-1018 are extracellular. N-linked (GlcNAc...) asparagine glycosylation is present at Asn-1017. Residues Thr-1019–Met-1034 constitute an intramembrane region (pore-forming). A Selectivity filter motif is present at residues Tyr-1035–Glu-1037. Residues Tyr-1035–Arg-1059 are Extracellular-facing. The Prevents fast channel inactivation motif lies at Leu-1040–Glu-1042. The helical transmembrane segment at Trp-1060–Leu-1080 threads the bilayer. Topologically, residues Leu-1081–Val-1116 are cytoplasmic. The stretch at Phe-1117–Trp-1135 is an intramembrane region. The Cytoplasmic portion of the chain corresponds to Arg-1136–Phe-1551. A coiled-coil region spans residues Leu-1184 to Met-1209. In terms of domain architecture, Nudix hydrolase spans Trp-1394–Met-1546. The Nudix box signature appears at Gly-1428–Met-1449.

This sequence belongs to the transient receptor (TC 1.A.4) family. LTrpC subfamily. TRPM2 sub-subfamily. As to quaternary structure, homotetramer.

It localises to the cell membrane. Activated by phosphatidylinositol 4,5-bisphosphate (PIP2). Although PIP2 is essential for the channel activation, its contribution to the level of channel activity is minimal. Also activated by diphosphate ribose-2'-phosphate. Upon binding to ADPR, channel activation requires only a short initial cytosolic Ca(2+) increase, then the activation is sustained by the uptake of extracellular Ca(2+). Activated by 2-aminoethyl diphenylborinate (2-APB) in a Ca(2+)-dependent manner. 2-APB prevents the inactivation of the channel. Functionally, nonselective, voltage-independent cation channel that mediates Ca(2+) and to a lesser extent Na(+) influx, leading to increased cytoplasmic Ca(2+) levels. Functions as a ligand-gated ion channel. Binding of ADP-ribose causes a conformation change; the channel is primed but still requires Ca(2+) binding to trigger channel opening. May have ADP-ribose pyrophosphatase activity which reduces ADP-ribose levels induced by oxidative stress, thus preventing the channel activation by reactive oxygen species. The polypeptide is Transient receptor potential cation channel subfamily M member-like 2 (Nematostella vectensis (Starlet sea anemone)).